A 598-amino-acid polypeptide reads, in one-letter code: Trichothecene efflux pump TRI12 (598 aa).

Residues 42 to 62 form a helical membrane-spanning segment; that stretch reads IVASFAAFSMNVVATYFVLQA. Residue Asn79 is glycosylated (N-linked (GlcNAc...) asparagine). 2 helical membrane-spanning segments follow: residues 109 to 129 and 135 to 155; these read PFVILTHILGLVGAIVGCTAT and LAAMTMLGVAAGPAGASPLFI. Asn161 is a glycosylation site (N-linked (GlcNAc...) asparagine). 10 helical membrane passes run 165–185, 197–217, 241–261, 273–293, 312–332, 356–376, 381–401, 409–429, 442–462, and 533–553; these read FLGLLIVSAPVVATNGLSPYL, WIFYIYIIMSTIAVTLIIIWY, WIGIILVIAGTSLFLLGVSWG, VIGLISSGAGTLVIFALYEVY, FVCILIISSIMGSMHLSLVIM, ATASFGTGAGVVVLGSLFHLV, WQILVGAMWLTAFLGAMSSIN, IALSVMTGFVVAWAQDITMLL, AFAVVAAARPFAGSIFTAAFI, and ANVYYFAMALGVIPIIASLCM. A disordered region spans residues 579-598; that stretch reads LEGNSESQPSPIILSMADKE.

This sequence belongs to the major facilitator superfamily.

The protein resides in the cell membrane. Its function is as follows. Efflux pump that provides the dual role of trichothecene export and self-protection by allowing the fungus to evade the harmful effect of its own trichothecene production. This chain is Trichothecene efflux pump TRI12, found in Fusarium sporotrichioides.